A 168-amino-acid chain; its full sequence is Ribosome maturation factor RimM (168 aa).

In terms of domain architecture, PRC barrel spans 93–167; the sequence is ENEFYQSDLV…YITLNMPEFI (75 aa).

This sequence belongs to the RimM family. As to quaternary structure, binds ribosomal protein uS19.

The protein localises to the cytoplasm. An accessory protein needed during the final step in the assembly of 30S ribosomal subunit, possibly for assembly of the head region. Essential for efficient processing of 16S rRNA. May be needed both before and after RbfA during the maturation of 16S rRNA. It has affinity for free ribosomal 30S subunits but not for 70S ribosomes. In Wolbachia sp. subsp. Brugia malayi (strain TRS), this protein is Ribosome maturation factor RimM.